We begin with the raw amino-acid sequence, 388 residues long: tRNA(Ile)-lysidine synthase (388 aa).

Residue 51–56 coordinates ATP; sequence SGGRDS.

The protein belongs to the tRNA(Ile)-lysidine synthase family.

Its subcellular location is the cytoplasm. It carries out the reaction cytidine(34) in tRNA(Ile2) + L-lysine + ATP = lysidine(34) in tRNA(Ile2) + AMP + diphosphate + H(+). Its function is as follows. Ligates lysine onto the cytidine present at position 34 of the AUA codon-specific tRNA(Ile) that contains the anticodon CAU, in an ATP-dependent manner. Cytidine is converted to lysidine, thus changing the amino acid specificity of the tRNA from methionine to isoleucine. The polypeptide is tRNA(Ile)-lysidine synthase (Bifidobacterium longum subsp. infantis (strain ATCC 15697 / DSM 20088 / JCM 1222 / NCTC 11817 / S12)).